We begin with the raw amino-acid sequence, 356 residues long: Phosphoribosylformylglycinamidine cyclo-ligase (356 aa).

Belongs to the AIR synthase family.

It is found in the cytoplasm. It catalyses the reaction 2-formamido-N(1)-(5-O-phospho-beta-D-ribosyl)acetamidine + ATP = 5-amino-1-(5-phospho-beta-D-ribosyl)imidazole + ADP + phosphate + H(+). Its pathway is purine metabolism; IMP biosynthesis via de novo pathway; 5-amino-1-(5-phospho-D-ribosyl)imidazole from N(2)-formyl-N(1)-(5-phospho-D-ribosyl)glycinamide: step 2/2. The chain is Phosphoribosylformylglycinamidine cyclo-ligase from Sinorhizobium fredii (strain NBRC 101917 / NGR234).